The chain runs to 252 residues: Ditrans,polycis-undecaprenyl-diphosphate synthase ((2E,6E)-farnesyl-diphosphate specific) (252 aa).

Residue Asp25 is part of the active site. Asp25 provides a ligand contact to Mg(2+). Substrate contacts are provided by residues 26–29 (GNGR), Trp30, Arg38, His42, and 70–72 (SSE). Asn73 functions as the Proton acceptor in the catalytic mechanism. Substrate is bound by residues Trp74, Arg76, and Arg193. His198 lines the Mg(2+) pocket. A substrate-binding site is contributed by 199–201 (RIS). Mg(2+) is bound at residue Glu212.

This sequence belongs to the UPP synthase family. In terms of assembly, homodimer. The cofactor is Mg(2+).

The catalysed reaction is 8 isopentenyl diphosphate + (2E,6E)-farnesyl diphosphate = di-trans,octa-cis-undecaprenyl diphosphate + 8 diphosphate. Catalyzes the sequential condensation of isopentenyl diphosphate (IPP) with (2E,6E)-farnesyl diphosphate (E,E-FPP) to yield (2Z,6Z,10Z,14Z,18Z,22Z,26Z,30Z,34E,38E)-undecaprenyl diphosphate (di-trans,octa-cis-UPP). UPP is the precursor of glycosyl carrier lipid in the biosynthesis of bacterial cell wall polysaccharide components such as peptidoglycan and lipopolysaccharide. The protein is Ditrans,polycis-undecaprenyl-diphosphate synthase ((2E,6E)-farnesyl-diphosphate specific) of Salmonella typhi.